Consider the following 317-residue polypeptide: MSGMIENGLQLSDNAKTLHSQMMSKGIGALFTQQELQKQMGIGSLTDLMSIVQELLDKNLIKLVKQNDELKFQGVLESEAQKKATMSAEEALVYSYIEASGREGIWSKTIKARTNLHQHVVLKCLKSLESQRYVKSVKSVKFPTRKIYMLYSLQPSVDITGGPWFTDGELDIEFINSLLTIVWRFISENTFPNGFKNFENGPKKNVFYAPNVKNYSTTQEILEFITAAQVANVELTPSNIRSLCEVLVYDDKLEKVTHDCYRVTLESILQMNQGEGEPEAGNKALEDEEEFSIFNYFKMFPASKHDKEVVYFDEWTI.

The protein belongs to the eukaryotic RPC34/RPC39 RNA polymerase subunit family. As to quaternary structure, component of the RNA polymerase III (Pol III) complex consisting of 17 subunits. Interacts with BRF1/TDS4.

The protein localises to the nucleus. Its function is as follows. DNA-dependent RNA polymerase catalyzes the transcription of DNA into RNA using the four ribonucleoside triphosphates as substrates. Specific peripheric component of RNA polymerase III which synthesizes small RNAs, such as 5S rRNA and tRNAs. Involved in recruitment of Pol III to the preinitiation complex. Involved in the configuration of an initiation-competent form of RNA polymerase. This Saccharomyces cerevisiae (strain ATCC 204508 / S288c) (Baker's yeast) protein is DNA-directed RNA polymerase III subunit RPC6 (RPC34).